The sequence spans 55 residues: Conotoxin Cal6.40 (55 aa).

An N-terminal signal peptide occupies residues Met1–Ala21. Intrachain disulfides connect Cys24–Cys36, Cys29–Cys41, and Cys35–Cys50.

As to expression, expressed by the venom duct.

It localises to the secreted. Functionally, probable neurotoxin. The protein is Conotoxin Cal6.40 of Californiconus californicus (California cone).